We begin with the raw amino-acid sequence, 631 residues long: Nucleoside triphosphatase I (631 aa).

The Helicase ATP-binding domain occupies 42-204; it reads FLGLDSMHSL…TMLVNLLRPG (163 aa). 55 to 62 provides a ligand contact to ATP; it reads HETGVGKT. A DEXH box motif is present at residues 141-144; that stretch reads DECH. In terms of domain architecture, Helicase C-terminal spans 367-532; it reads KFIDVCLGIL…EFVQLFRVFK (166 aa).

The protein belongs to the helicase family. NPH I subfamily. In terms of assembly, monomer.

It carries out the reaction a ribonucleoside 5'-triphosphate + H2O = a ribonucleoside 5'-diphosphate + phosphate + H(+). In terms of biological role, serves two roles in transcription; it acts in concert with viral termination factor/capping enzyme to catalyze release of UUUUUNU-containing nascent RNA from the elongation complex, and it acts by itself as a polymerase elongation factor to facilitate readthrough of intrinsic pause sites. This chain is Nucleoside triphosphatase I (NPH1), found in Homo sapiens (Human).